The following is a 351-amino-acid chain: Anthranilate phosphoribosyltransferase (351 aa).

5-phospho-alpha-D-ribose 1-diphosphate is bound by residues G80, 83–84 (GD), T88, 90–93 (NIST), 108–116 (KHGNRSVTS), and S120. G80 contributes to the anthranilate binding site. S92 provides a ligand contact to Mg(2+). Anthranilate is bound at residue N111. R166 is an anthranilate binding site. Residues D229 and E230 each coordinate Mg(2+).

The protein belongs to the anthranilate phosphoribosyltransferase family. Homodimer. Mg(2+) is required as a cofactor.

The enzyme catalyses N-(5-phospho-beta-D-ribosyl)anthranilate + diphosphate = 5-phospho-alpha-D-ribose 1-diphosphate + anthranilate. It functions in the pathway amino-acid biosynthesis; L-tryptophan biosynthesis; L-tryptophan from chorismate: step 2/5. Functionally, catalyzes the transfer of the phosphoribosyl group of 5-phosphorylribose-1-pyrophosphate (PRPP) to anthranilate to yield N-(5'-phosphoribosyl)-anthranilate (PRA). The polypeptide is Anthranilate phosphoribosyltransferase (Pelodictyon phaeoclathratiforme (strain DSM 5477 / BU-1)).